Consider the following 562-residue polypeptide: Probable ganciclovir kinase (562 aa).

Residues 1 to 16 are compositionally biased toward polar residues; the sequence is MDNGVETPQGQKTQPI. Residues 1 to 32 form a disordered region; the sequence is MDNGVETPQGQKTQPINLPPVRKKLRKHEGLG. ATP is bound by residues 201–209 and Lys218; that span reads LGVGAYGKV. Asp313 functions as the Proton acceptor in the catalytic mechanism.

Belongs to the protein kinase superfamily. Tyr protein kinase family. HCMV ganciclovir subfamily.

Phosphorylates the antiviral nucleoside analog ganciclovir. This Homo sapiens (Human) protein is Probable ganciclovir kinase (U69).